The chain runs to 265 residues: MRVTVFHNSIPASITAAQKLTKLLKSGHFELDERHPEVVVTIGGDGTLLSAFHRYADQLNSIRFIGVHTGHLGFYTDWRDFEIEDLVIALKEDSGQSVSYPLLDVQATYADATSAHYLALNESTLKRLNGTMRTEVYIKGDFFESFRGDGLCVSTPTGSTAYSKSNGGAVIHPRLDALQMTEIASINNRVFRTLSSPIITAPDEWVTLEPTGRDDYVMTVDQFVINPPTIKQIRYKIAKERIHFARYRHMHFWDRVEDAFIGAKH.

Residue D45 is the Proton acceptor of the active site. Residues 45 to 46 (DG), 121 to 122 (NE), R147, D149, 160 to 165 (TAYSKS), A184, and Q222 contribute to the NAD(+) site.

Belongs to the NAD kinase family. A divalent metal cation is required as a cofactor.

The protein resides in the cytoplasm. The catalysed reaction is NAD(+) + ATP = ADP + NADP(+) + H(+). Involved in the regulation of the intracellular balance of NAD and NADP, and is a key enzyme in the biosynthesis of NADP. Catalyzes specifically the phosphorylation on 2'-hydroxyl of the adenosine moiety of NAD to yield NADP. The polypeptide is NAD kinase (Lacticaseibacillus paracasei (strain ATCC 334 / BCRC 17002 / CCUG 31169 / CIP 107868 / KCTC 3260 / NRRL B-441) (Lactobacillus paracasei)).